The following is a 178-amino-acid chain: dCTP deaminase, dUMP-forming (178 aa).

DCTP contacts are provided by residues 96 to 101 (RSSLGR), aspartate 113, 121 to 123 (TLE), glutamine 142, tyrosine 156, and glutamine 163. Residue glutamate 123 is the Proton donor/acceptor of the active site.

This sequence belongs to the dCTP deaminase family. Homotrimer.

It carries out the reaction dCTP + 2 H2O = dUMP + NH4(+) + diphosphate. Its pathway is pyrimidine metabolism; dUMP biosynthesis; dUMP from dCTP: step 1/1. Bifunctional enzyme that catalyzes both the deamination of dCTP to dUTP and the hydrolysis of dUTP to dUMP without releasing the toxic dUTP intermediate. This chain is dCTP deaminase, dUMP-forming, found in Acetivibrio thermocellus (strain ATCC 27405 / DSM 1237 / JCM 9322 / NBRC 103400 / NCIMB 10682 / NRRL B-4536 / VPI 7372) (Clostridium thermocellum).